The chain runs to 228 residues: 7-cyano-7-deazaguanine synthase (228 aa).

8-18 (LSGGLDSTTCL) contributes to the ATP binding site. Residues C188, C198, C201, and C204 each contribute to the Zn(2+) site.

It belongs to the QueC family. It depends on Zn(2+) as a cofactor.

The enzyme catalyses 7-carboxy-7-deazaguanine + NH4(+) + ATP = 7-cyano-7-deazaguanine + ADP + phosphate + H2O + H(+). The protein operates within purine metabolism; 7-cyano-7-deazaguanine biosynthesis. Its function is as follows. Catalyzes the ATP-dependent conversion of 7-carboxy-7-deazaguanine (CDG) to 7-cyano-7-deazaguanine (preQ(0)). This chain is 7-cyano-7-deazaguanine synthase, found in Legionella pneumophila subsp. pneumophila (strain Philadelphia 1 / ATCC 33152 / DSM 7513).